A 423-amino-acid chain; its full sequence is Glutamate-1-semialdehyde 2,1-aminomutase (423 aa).

At Lys262 the chain carries N6-(pyridoxal phosphate)lysine.

This sequence belongs to the class-III pyridoxal-phosphate-dependent aminotransferase family. HemL subfamily. Homodimer. Requires pyridoxal 5'-phosphate as cofactor.

It localises to the cytoplasm. It catalyses the reaction (S)-4-amino-5-oxopentanoate = 5-aminolevulinate. It functions in the pathway porphyrin-containing compound metabolism; protoporphyrin-IX biosynthesis; 5-aminolevulinate from L-glutamyl-tRNA(Glu): step 2/2. In Saccharophagus degradans (strain 2-40 / ATCC 43961 / DSM 17024), this protein is Glutamate-1-semialdehyde 2,1-aminomutase.